The primary structure comprises 626 residues: Alpha terpineol synthase, chloroplastic (626 aa).

Residues 1 to 38 constitute a chloroplast transit peptide; that stretch reads MALLSVAPLASKSRLHKTLITSAHHLKPSPTTIPTLPV. Asp-377, Asp-381, and Asp-529 together coordinate Mg(2+). The DDXXD motif signature appears at 377 to 381; sequence DDIYD.

The protein belongs to the terpene synthase family. Tpsd subfamily. Mg(2+) is required as a cofactor. Requires Mn(2+) as cofactor.

The protein localises to the plastid. Its subcellular location is the chloroplast. It catalyses the reaction (2E)-geranyl diphosphate + H2O = (S)-alpha-terpineol + diphosphate. It carries out the reaction (2E)-geranyl diphosphate + H2O = (R)-alpha-terpineol + diphosphate. The catalysed reaction is (2E)-geranyl diphosphate + H2O = (2E)-geraniol + diphosphate. The enzyme catalyses (2E)-geranyl diphosphate = terpinolene + diphosphate. It catalyses the reaction (2E)-geranyl diphosphate = (4S)-limonene + diphosphate. Its pathway is terpene metabolism; oleoresin biosynthesis. It participates in secondary metabolite biosynthesis; terpenoid biosynthesis. In terms of biological role, monoterpene synthase (TPS) involved in the biosynthesis of monoterpene natural products included in conifer oleoresin secretions and volatile emissions; these compounds contribute to biotic and abiotic stress defense against herbivores and pathogens. Catalyzes the conversion of (2E)-geranyl diphosphate (GPP) to (-)-alpha-terpineol, (+)-alpha-terpineol and terpin-4-ol, and, to a lower extent, to geraniol, terpinolene and (-)-limonene. This chain is Alpha terpineol synthase, chloroplastic, found in Pinus banksiana (Jack pine).